Reading from the N-terminus, the 1515-residue chain is DNA topoisomerase 2-binding protein 1 (1515 aa).

2 consecutive BRCT domains span residues 101-189 and 195-284; these read VYNM…KYTD and FKCP…IYKA. Position 298 is a phosphothreonine (threonine 298). 3 consecutive BRCT domains span residues 353–443, 551–636, and 644–741; these read APED…SYIH, REEG…SNPL, and SGVT…HFLV. The interval 759 to 893 is interaction with CIP2A; the sequence is VSSNPDLPAH…TDSHSASPQL (135 aa). Position 782 is a phosphothreonine (threonine 782). Residues 799 to 826 are disordered; it reads SQQRGQDPTFPPVRQPLTKEPSLHLDTP. Threonine 851 is subject to Phosphothreonine. A phosphoserine mark is found at serine 862, serine 863, serine 866, serine 888, and serine 890. Residues 880–891 are compositionally biased toward polar residues; sequence SSRNTDSHSASP. The interval 880–901 is disordered; it reads SSRNTDSHSASPQLKGAHLEEE. Positions 902 to 993 constitute a BRCT 6 domain; it reads ETRKPLDSVV…KHLPESLYPH (92 aa). The disordered stretch occupies residues 1020-1055; the sequence is VSASKDDGPDHLSVEGNETNTMGTNDKESPLLNGSG. The span at 1023-1032 shows a compositional bias: basic and acidic residues; the sequence is SKDDGPDHLS. Position 1064 is a phosphothreonine (threonine 1064). Over residues 1097–1116 the composition is skewed to low complexity; sequence SRSSCNSASSTPDSARSVRS. 3 disordered regions span residues 1097–1119, 1203–1255, and 1491–1515; these read SRSS…SGRS, VTQA…TQEE, and KKGG…PRVH. The span at 1217–1229 shows a compositional bias: pro residues; that stretch reads PPVAERPLIPEPQ. The region spanning 1255–1347 is the BRCT 7 domain; the sequence is ETHRKVKKQY…RFVQEEDYEW (93 aa). The short motif at 1510 to 1513 is the Nuclear localization signal element; that stretch reads KRPR.

Belongs to the TOPBP1 family. As to quaternary structure, interacts (via BRCT domains 1 and 2) with (phosphorylated) MDC1; promoting TOPBP1 recruitment to DNA damage sites during mitosis. Interacts (via BRCT domains 7 and 8) with (autophosphorylated) ATR; promoting activation of ATR. Interacts (via BRCT domains 7 and 8) with (phosphorylated) POLQ; specifically binds POLQ phosphorylated by PLK1, promoting POLQ recruitment to DNA damage sites. Interacts (via BRCT domains 1 and 2) with (phosphorylated) RAD9A. Interacts (via BRCT domain 2) with (phosphorylated) TP53BP1. Interacts (via BRCT domain 2) with (phosphorylated) HTATSF1. Interacts (via BRCT domains 7 and 8) with (phosphorylated) RAD51; promoting RAD51 recruitment to damaged chromatin. Interacts with CIP2A; forming the CIP2A-TOPBP1 complex. Interacts with POLE. Interacts with UBR5. Interacts with E2F1. Interacts with PML. Interacts with SMARCA2. Interacts with SMARCA4. Interacts with RHNO1. May interact with TOP2B. Interacts with TICRR. Interacts with HELB. Post-translationally, phosphorylated on serine and threonine residues in response to X-ray irradiation. Ubiquitinated and degraded by the proteasome. X-ray irradiation reduces ubiquitination. Deubiquitinated by USP13; leading to TOPBP1 stabilizion and activation of the ATR-TOPBP1 axis pathway. Highly expressed in testis.

The protein resides in the nucleus. Its subcellular location is the chromosome. It is found in the cytoplasm. The protein localises to the cytoskeleton. It localises to the microtubule organizing center. The protein resides in the centrosome. Its subcellular location is the spindle pole. Functionally, scaffold protein that acts as a key protein-protein adapter in DNA replication and DNA repair. Composed of multiple BRCT domains, which specifically recognize and bind phosphorylated proteins, bringing proteins together into functional combinations. Required for DNA replication initiation but not for the formation of pre-replicative complexes or the elongation stages. Necessary for the loading of replication factors onto chromatin, including GMNC, CDC45, DNA polymerases and components of the GINS complex. Plays a central role in DNA repair by bridging proteins and promoting recruitment of proteins to DNA damage sites. Involved in double-strand break (DSB) repair via homologous recombination in S-phase by promoting the exchange between the DNA replication factor A (RPA) complex and RAD51. Mechanistically, TOPBP1 is recruited to DNA damage sites in S-phase via interaction with phosphorylated HTATSF1, and promotes the loading of RAD51, thereby facilitating RAD51 nucleofilaments formation and RPA displacement, followed by homologous recombination. Involved in microhomology-mediated end-joining (MMEJ) DNA repair by promoting recruitment of polymerase theta (POLQ) to DNA damage sites during mitosis. MMEJ is an alternative non-homologous end-joining (NHEJ) machinery that takes place during mitosis to repair DSBs in DNA that originate in S-phase. Recognizes and binds POLQ phosphorylated by PLK1, enabling its recruitment to DSBs for subsequent repair. Involved in G1 DNA damage checkpoint by acting as a molecular adapter that couples TP53BP1 and the 9-1-1 complex. In response to DNA damage, triggers the recruitment of checkpoint signaling proteins on chromatin, which activate the CHEK1 signaling pathway and block S-phase progression. Acts as an activator of the kinase activity of ATR. Also required for chromosomal stability when DSBs occur during mitosis by forming filamentous assemblies that bridge MDC1 and tether broken chromosomes during mitosis. Together with CIP2A, plays an essential role in the response to genome instability generated by the presence of acentric chromosome fragments derived from shattered chromosomes within micronuclei. Micronuclei, which are frequently found in cancer cells, consist of chromatin surrounded by their own nuclear membrane: following breakdown of the micronuclear envelope, a process associated with chromothripsis, the CIP2A-TOPBP1 complex tethers chromosome fragments during mitosis to ensure clustered segregation of the fragments to a single daughter cell nucleus, facilitating re-ligation with limited chromosome scattering and loss. Recruits the SWI/SNF chromatin remodeling complex to E2F1-responsive promoters, thereby down-regulating E2F1 activity and inhibiting E2F1-dependent apoptosis during G1/S transition and after DNA damage. This is DNA topoisomerase 2-binding protein 1 from Mus musculus (Mouse).